Reading from the N-terminus, the 336-residue chain is DNA repair protein Rad51 homolog (336 aa).

Residues 1-10 (MEKLTNVQAQ) show a composition bias toward polar residues. Positions 1-20 (MEKLTNVQAQQEEEEEEGPL) are disordered. 124 to 131 (GEFRCGKT) is an ATP binding site.

Belongs to the RecA family. RAD51 subfamily. In terms of assembly, interacts with Rrp6; the interaction is required for the recruitment of spn-A to the DNA-damage response foci. Highly expressed in ovaries.

The protein resides in the nucleus. The protein localises to the cytoplasm. Its function is as follows. Plays an important role in homologous strand exchange, a key step in DNA repair through homologous recombination (HR). Binds to single and double-stranded DNA and exhibits DNA-dependent ATPase activity. Underwinds duplex DNA. Spindle genes are required for each of the symmetry-breaking steps that generate polarity during egg axis formation; oocyte positioning at the posterior of the cyst to generate the first AP polarity and inhibition of gurken (grk) signaling to the follicle cell layer to polarize first the AP axis and then DV axis. May have a role in female meiosis. In Drosophila melanogaster (Fruit fly), this protein is DNA repair protein Rad51 homolog (spn-A).